We begin with the raw amino-acid sequence, 626 residues long: Receptor-like protein 4 (626 aa).

A signal peptide spans Met1–Ala22. The Extracellular portion of the chain corresponds to Arg23–Lys549. Asn61, Asn282, Asn333, and Asn417 each carry an N-linked (GlcNAc...) asparagine glycan. LRR repeat units lie at residues Arg420 to Leu444, Lys445 to Val468, Ser470 to Leu492, and Thr493 to Arg516. N-linked (GlcNAc...) asparagine glycosylation is found at Asn451 and Asn482. N-linked (GlcNAc...) asparagine glycosylation occurs at Asn524. A helical transmembrane segment spans residues Ile550 to Trp570. The Cytoplasmic portion of the chain corresponds to Trp571–Ser626. Positions Met603 to Ser626 are disordered.

The protein belongs to the RLP family.

The protein resides in the cell membrane. This is Receptor-like protein 4 from Arabidopsis thaliana (Mouse-ear cress).